The following is a 189-amino-acid chain: Nucleoside triphosphate pyrophosphatase (189 aa).

Catalysis depends on aspartate 70, which acts as the Proton acceptor.

Belongs to the Maf family. A divalent metal cation serves as cofactor.

It is found in the cytoplasm. The enzyme catalyses a ribonucleoside 5'-triphosphate + H2O = a ribonucleoside 5'-phosphate + diphosphate + H(+). The catalysed reaction is a 2'-deoxyribonucleoside 5'-triphosphate + H2O = a 2'-deoxyribonucleoside 5'-phosphate + diphosphate + H(+). Nucleoside triphosphate pyrophosphatase. May have a dual role in cell division arrest and in preventing the incorporation of modified nucleotides into cellular nucleic acids. In Xylella fastidiosa (strain 9a5c), this protein is Nucleoside triphosphate pyrophosphatase.